A 599-amino-acid chain; its full sequence is Potassium-transporting ATPase potassium-binding subunit (599 aa).

12 consecutive transmembrane segments (helical) span residues 8-28, 61-81, 133-153, 176-196, 280-300, 311-331, 366-386, 391-411, 416-436, 456-476, 521-541, and 563-583; these read LLAL…IWLA, WQYA…VYAL, ALAV…FALF, AWLL…NGVI, LTNF…CFAF, WAVL…ITPA, INAS…AVIA, FTPL…VVFG, GLYG…LMIG, IAIL…VLAG, LLGL…LAIA, and LFVL…YVPA.

This sequence belongs to the KdpA family. The system is composed of three essential subunits: KdpA, KdpB and KdpC.

Its subcellular location is the cell inner membrane. Part of the high-affinity ATP-driven potassium transport (or Kdp) system, which catalyzes the hydrolysis of ATP coupled with the electrogenic transport of potassium into the cytoplasm. This subunit binds the periplasmic potassium ions and delivers the ions to the membrane domain of KdpB through an intramembrane tunnel. The protein is Potassium-transporting ATPase potassium-binding subunit of Polaromonas naphthalenivorans (strain CJ2).